A 603-amino-acid chain; its full sequence is MDAQTFKTAIVRRRLVDVLMNPELKATLVLKNGLVINVVTREIYPADVAVYDEYILKVGDASDLIGPETEVVDLQGKYYVSPGFIDSHMHFESSMLTISEFSRLSIPSGTTTLVADPHEIGNALGPVGIKAMAEETKVVPNRVYLVVPALTPDCPGLETAGYDITSRDMPEILNYPNVIGIGELQGFSNAKYVYKYTPEIITDLIASTTYAKSIGKIVDGNAPELFGSELAAHLIAAGTEASCHETTTKEECVEKLRYGMYVFMREGSTQKNMAECIRAVTEEGLDSRRLIGATDDMVAEDLAKNGHMNWVVARIIKQGIDPVEAIQMVTINPATYFGLKHVGVLAPGKMADIVVISDLMDMKVEKVYIGGKLVAEKGKMVVNIPKYTYPEEVKHSVKCKPVTAEALEIKATGSNAVVRTIGLIPDQNLTESFEFTVPVSGGVAQPDLTQDVLPIAVVERYGRNGSIGRAFVRGFGLKGGAFAESVSHDAHNIIVVGTSYQDMALAVNRVIEMGGGVAVVKNGRVLGDLRLPVGGLITDELDGYELSRKIAELHRLTAVELGCTVHAPFMHLSFLALTTSPKWKITDQGLIDVNSFAIIPPVK.

Belongs to the metallo-dependent hydrolases superfamily. Adenine deaminase family. Requires Mn(2+) as cofactor.

It catalyses the reaction adenine + H2O + H(+) = hypoxanthine + NH4(+). The sequence is that of Adenine deaminase 1 from Carboxydothermus hydrogenoformans (strain ATCC BAA-161 / DSM 6008 / Z-2901).